We begin with the raw amino-acid sequence, 140 residues long: Putative nickel-responsive regulator 2 (140 aa).

Residues His81, His92, His94, and Cys100 each coordinate Ni(2+).

Belongs to the transcriptional regulatory CopG/NikR family. It depends on Ni(2+) as a cofactor.

Its function is as follows. Transcriptional regulator. In Methanosarcina mazei (strain ATCC BAA-159 / DSM 3647 / Goe1 / Go1 / JCM 11833 / OCM 88) (Methanosarcina frisia), this protein is Putative nickel-responsive regulator 2.